The following is a 98-amino-acid chain: Prolactin-releasing peptide (98 aa).

Positions 1-22 (MKAVGAWLLCLLLLGLALQGAA) are cleaved as a signal peptide. Disordered regions lie at residues 52–71 (RFGR…PRRV) and 79–98 (GGAE…LVQE). Phenylalanine amide is present on F53. Positions 58 to 98 (AAPGDGPRPGPRRVPACFRLEGGAEPSRALPGRLTAQLVQE) are excised as a propeptide.

In terms of processing, amidation of C-terminus is required for receptor interaction. In terms of tissue distribution, medulla oblongata and hypothalamus.

It is found in the secreted. Functionally, stimulates prolactin (PRL) release and regulates the expression of prolactin through its receptor GPR10. May stimulate lactotrophs directly to secrete PRL. This is Prolactin-releasing peptide (PRLH) from Bos taurus (Bovine).